We begin with the raw amino-acid sequence, 353 residues long: Photosystem II D2 protein (353 aa).

Thr-2 carries the N-acetylthreonine modification. Thr-2 is subject to Phosphothreonine. Residues 41–61 traverse the membrane as a helical segment; it reads CAYFAVGGWFTGTTFVTSWYT. His-118 contributes to the chlorophyll a binding site. The helical transmembrane segment at 125–141 threads the bilayer; that stretch reads GFMLRQFELARSVQLRP. Pheophytin a contacts are provided by Gln-130 and Asn-143. A helical membrane pass occupies residues 153–166; that stretch reads VFVSVFLIYPLGQS. His-198 contacts chlorophyll a. A helical transmembrane segment spans residues 208–228; sequence AALLCAIHGATVENTLFEDGD. The a plastoquinone site is built by His-215 and Phe-262. His-215 serves as a coordination point for Fe cation. Fe cation is bound at residue His-269. A helical membrane pass occupies residues 279-295; it reads GLWMSALGVVGLALNLR.

Belongs to the reaction center PufL/M/PsbA/D family. PSII is composed of 1 copy each of membrane proteins PsbA, PsbB, PsbC, PsbD, PsbE, PsbF, PsbH, PsbI, PsbJ, PsbK, PsbL, PsbM, PsbT, PsbX, PsbY, PsbZ, Psb30/Ycf12, at least 3 peripheral proteins of the oxygen-evolving complex and a large number of cofactors. It forms dimeric complexes. The D1/D2 heterodimer binds P680, chlorophylls that are the primary electron donor of PSII, and subsequent electron acceptors. It shares a non-heme iron and each subunit binds pheophytin, quinone, additional chlorophylls, carotenoids and lipids. There is also a Cl(-1) ion associated with D1 and D2, which is required for oxygen evolution. The PSII complex binds additional chlorophylls, carotenoids and specific lipids. is required as a cofactor.

It localises to the plastid. The protein resides in the chloroplast thylakoid membrane. It carries out the reaction 2 a plastoquinone + 4 hnu + 2 H2O = 2 a plastoquinol + O2. Functionally, photosystem II (PSII) is a light-driven water:plastoquinone oxidoreductase that uses light energy to abstract electrons from H(2)O, generating O(2) and a proton gradient subsequently used for ATP formation. It consists of a core antenna complex that captures photons, and an electron transfer chain that converts photonic excitation into a charge separation. The D1/D2 (PsbA/PsbD) reaction center heterodimer binds P680, the primary electron donor of PSII as well as several subsequent electron acceptors. D2 is needed for assembly of a stable PSII complex. This Atropa belladonna (Belladonna) protein is Photosystem II D2 protein.